A 460-amino-acid polypeptide reads, in one-letter code: Pentatricopeptide repeat-containing protein At5g43790 (460 aa).

PPR repeat units lie at residues 70-107, 111-142, 149-179, 180-214, 215-249, 250-280, 281-315, 316-351, and 352-382; these read SVFLYNTLISSIVSNHNSTQTHLAFSLYDQILSSRSNF, NEFTYPSLFKASGFDAQWHRHGRALHAHVLKF, DRFVQAALVGFYANCGKLREARSLFERIREP, DLATWNTLLAAYANSEEIDSDEEVLLLFMRMQVRP, NELSLVALIKSCANLGEFVRGVWAHVYVLKNNLTL, NQFVGTSLIDLYSKCGCLSFARKVFDEMSQR, DVSCYNAMIRGLAVHGFGQEGIELYKSLISQGLVP, DSATFVVTISACSHSGLVDEGLQIFNSMKAVYGIEP, and KVEHYGCLVDLLGRSGRLEEAEECIKKMPVK. A type E motif; degenerate region spans residues 387–460; sequence LWRSFLGSSQ…NKSPGISTLN (74 aa).

It belongs to the PPR family. PCMP-E subfamily.

The polypeptide is Pentatricopeptide repeat-containing protein At5g43790 (PCMP-E30) (Arabidopsis thaliana (Mouse-ear cress)).